A 136-amino-acid polypeptide reads, in one-letter code: Protein PsiE homolog (136 aa).

4 helical membrane passes run 15 to 35 (AMQTVLNLGLLCLGIILIVFL), 58 to 78 (VEGLVVYFLYFEFIALIVKYF), 83 to 103 (HFPLRYFVYIGITAIVRLIII), and 108 to 128 (PMAVLIYSAAILILVITLWLC).

The protein belongs to the PsiE family.

The protein resides in the cell inner membrane. This is Protein PsiE homolog from Klebsiella pneumoniae (strain 342).